We begin with the raw amino-acid sequence, 293 residues long: 4-diphosphocytidyl-2-C-methyl-D-erythritol kinase (293 aa).

Residue lysine 10 is part of the active site. 94–104 is a binding site for ATP; sequence PVSAGLAGGSS. Aspartate 136 is a catalytic residue.

This sequence belongs to the GHMP kinase family. IspE subfamily.

It catalyses the reaction 4-CDP-2-C-methyl-D-erythritol + ATP = 4-CDP-2-C-methyl-D-erythritol 2-phosphate + ADP + H(+). Its pathway is isoprenoid biosynthesis; isopentenyl diphosphate biosynthesis via DXP pathway; isopentenyl diphosphate from 1-deoxy-D-xylulose 5-phosphate: step 3/6. Its function is as follows. Catalyzes the phosphorylation of the position 2 hydroxy group of 4-diphosphocytidyl-2C-methyl-D-erythritol. The chain is 4-diphosphocytidyl-2-C-methyl-D-erythritol kinase from Listeria monocytogenes serovar 1/2a (strain ATCC BAA-679 / EGD-e).